A 288-amino-acid polypeptide reads, in one-letter code: Intermediate transcription factor 3 small subunit (288 aa).

It belongs to the orthopoxvirus OPG134 family. In terms of assembly, heterodimer of a 45 kDa (A23R) and a 32 kDa (A8R) subunit to form the virus intermediate transcription factor (VITF)-3.

Acts with RNA polymerase to initiate transcription from intermediate gene promoters. The polypeptide is Intermediate transcription factor 3 small subunit (OPG134) (Vaccinia virus (strain Copenhagen) (VACV)).